A 92-amino-acid chain; its full sequence is Large ribosomal subunit protein uL24c (92 aa).

It belongs to the universal ribosomal protein uL24 family. Part of the 50S ribosomal subunit.

It localises to the plastid. Its subcellular location is the chloroplast. In terms of biological role, one of two assembly initiator proteins, it binds directly to the 5'-end of the 23S rRNA, where it nucleates assembly of the 50S subunit. The protein is Large ribosomal subunit protein uL24c (rpl24) of Gracilaria tenuistipitata var. liui (Red alga).